Reading from the N-terminus, the 295-residue chain is Undecaprenyl-diphosphatase (295 aa).

Helical transmembrane passes span 12–34 (IAIAILQGATELFPVSSLGHAVV), 50–70 (FLPFLVFLHLGTAAALLLYFW), 95–115 (IFMLLVVATLPAIVVGGLLEH), 120–140 (LFESAPIAAFFLVVNGGLLLF), 209–229 (AHFSFLIALPIILGATVLEVP), 243–263 (TAALAAVAAGITAWLSTAFLM), and 272–292 (WALKPFAFYCIIAGLGALAWL).

This sequence belongs to the UppP family.

Its subcellular location is the cell inner membrane. It carries out the reaction di-trans,octa-cis-undecaprenyl diphosphate + H2O = di-trans,octa-cis-undecaprenyl phosphate + phosphate + H(+). Its function is as follows. Catalyzes the dephosphorylation of undecaprenyl diphosphate (UPP). Confers resistance to bacitracin. In Granulibacter bethesdensis (strain ATCC BAA-1260 / CGDNIH1), this protein is Undecaprenyl-diphosphatase.